Consider the following 306-residue polypeptide: Glutaminase (306 aa).

Positions 61, 111, 155, 162, 186, 238, and 256 each coordinate substrate.

Belongs to the glutaminase family. As to quaternary structure, homotetramer.

It carries out the reaction L-glutamine + H2O = L-glutamate + NH4(+). The sequence is that of Glutaminase from Pseudomonas entomophila (strain L48).